We begin with the raw amino-acid sequence, 251 residues long: Ly6/PLAUR domain-containing protein 5 (251 aa).

Positions 1 to 25 (MAMGVPRVILLCLFGAALCLTGSQA) are cleaved as a signal peptide. N-linked (GlcNAc...) asparagine glycosylation is found at Asn-120 and Asn-174. Residues 135-214 (CYACIGVHQD…GSCCEGYLCN (80 aa)) enclose the UPAR/Ly6 domain. The GPI-anchor amidated alanine moiety is linked to residue Ala-225. Positions 226 to 251 (SATTPPRALQVLALLLPVLLLVGLSA) are cleaved as a propeptide — removed in mature form.

The protein resides in the cell membrane. This chain is Ly6/PLAUR domain-containing protein 5 (LYPD5), found in Homo sapiens (Human).